The chain runs to 283 residues: Putative ABC transporter ATP-binding protein MA_4342 (283 aa).

Positions 3 to 238 (IILENVSFFY…KNVPLPPVTS (236 aa)) constitute an ABC transporter domain. Residue 40–47 (GEKGAGKS) coordinates ATP.

It belongs to the ABC transporter superfamily.

The protein resides in the cell membrane. Its function is as follows. Probably part of an ABC transporter complex. Responsible for energy coupling to the transport system. The polypeptide is Putative ABC transporter ATP-binding protein MA_4342 (Methanosarcina acetivorans (strain ATCC 35395 / DSM 2834 / JCM 12185 / C2A)).